Here is a 674-residue protein sequence, read N- to C-terminus: MRRPELIMRSLPLILFLSLGSFHLAAAAVDDQFTFDGFAGVNLTLDGTAVVTPGGLLMLTNGTTLLKGHAFYPSPLRFFHEATSGGGSSTVRSFSTAFVFGIVSEYADLSSPGLAFVVAKSRDFSSALQSQYMGLANARNNGNASNHFLAVELDTIVNAEFGDMSDNHVGIDVDGLASAAADDAGYHDDRTGAFVNMSLLSRAAARVWVDFDARTSLVNVTMAPLELPKPTTPLLSAAVNLSAVIEDEAYVGFSSSTGVVASRHYVLAWSFKMDGPAPSLNVSKLPALPVTIARAPSNVLKILLPIASAALVSALAIAVLVIHRRRRRYAELKEEWEVAFGPHRFSYKDLFRATNGFSDERLLGFGGFGRVYKGVLLVSRVEIAVKKVSHESRQGMKEFIAEVVSIGQLRHRNLVQLLGYCRQKGELLLVYDYMPNGSLDKYLYAENSKILSWAQRFRIIKGIASSILYLHEDWEQVVLHRDIKASNVLLDAEMNCRLGDFGLARLYDRGTDPHTTHVVGTIGYLAPELGHTGRPSKASDIFAFGVFMLEVTCGRRPVLQDTNGGQLLLVDMVLEHWRQGTVTDAVDPRLQGDFAVEEASLVLKLCLLCSHPLPSARPGIRQVVQLLDGAMPLPELSQAHLSCNMLALMQNQMGNSCSVASSVAGNISDIPRAR.

The first 27 residues, 1 to 27 (MRRPELIMRSLPLILFLSLGSFHLAAA), serve as a signal peptide directing secretion. The Extracellular portion of the chain corresponds to 28–301 (AVDDQFTFDG…IARAPSNVLK (274 aa)). The legume-lectin like stretch occupies residues 31–275 (DQFTFDGFAG…VLAWSFKMDG (245 aa)). N-linked (GlcNAc...) asparagine glycosylation is found at N42, N61, N143, N196, N219, N240, and N281. A helical transmembrane segment spans residues 302–322 (ILLPIASAALVSALAIAVLVI). At 323–674 (HRRRRRYAEL…GNISDIPRAR (352 aa)) the chain is on the cytoplasmic side. Residues 357-636 (FSDERLLGFG…LDGAMPLPEL (280 aa)) enclose the Protein kinase domain. Residues 363–371 (LGFGGFGRV) and K386 contribute to the ATP site. D482 (proton acceptor) is an active-site residue. Residues T511, T515, T516, and T521 each carry the phosphothreonine modification.

The protein in the C-terminal section; belongs to the protein kinase superfamily. Ser/Thr protein kinase family. This sequence in the N-terminal section; belongs to the leguminous lectin family. Interacts with B'KAPPA. In terms of processing, autophosphorylated at Thr-511, Thr-515 or Thr-516, and Thr-521 in response to salt stress. Dephosphorylated by phosphatase 2A in response to salt stress. In terms of tissue distribution, expressed in root epidermal cells.

It localises to the cell membrane. It catalyses the reaction L-seryl-[protein] + ATP = O-phospho-L-seryl-[protein] + ADP + H(+). The catalysed reaction is L-threonyl-[protein] + ATP = O-phospho-L-threonyl-[protein] + ADP + H(+). With respect to regulation, activated by autophosphorylation in response to salt stress. In terms of biological role, lectin-domain containing receptor kinase involved in salt stress response. Acts as a negative regulator of salt tolerance. Mediates salt sensitivity by phosphorylating and activating MPK3 and MPK6. Promotes ethylene production and mediates salt-induced ethylene signaling. Promotes the accumulation of reactive oxygen species (ROS) under salt stress conditions. Its kinase activity is triggered by salt stress and is required for its function in salt stress response. Phosphorylates B'KAPPA, a B regulatory subunit of phosphatase 2A (PP2A). In Oryza sativa subsp. japonica (Rice), this protein is L-type lectin-domain containing receptor kinase SIT1.